Reading from the N-terminus, the 1610-residue chain is E3 ubiquitin-protein ligase listerin (1610 aa).

Positions M1–G10 are enriched in basic and acidic residues. The tract at residues M1–S20 is disordered. HEAT repeat units lie at residues L110–A148, V314–T351, I372–D408, C409–K443, S590–E626, L627–F664, K736–E773, G965–N1003, C1119–V1156, R1322–D1354, L1355–A1393, and F1435–R1473. An RING-type; atypical zinc finger spans residues C1558–R1604.

This sequence belongs to the LTN1 family. As to quaternary structure, component of the ribosome quality control complex (RQC), composed of the E3 ubiquitin ligase rkr1/ltn1, rqc1 and mtr1/rqc2, as well as cdc48 and its ubiquitin-binding cofactors. RQC forms a stable complex with 60S ribosomal subunits.

The protein localises to the nucleus. The protein resides in the cytoplasm. It is found in the cytosol. It carries out the reaction S-ubiquitinyl-[E2 ubiquitin-conjugating enzyme]-L-cysteine + [acceptor protein]-L-lysine = [E2 ubiquitin-conjugating enzyme]-L-cysteine + N(6)-ubiquitinyl-[acceptor protein]-L-lysine.. The protein operates within protein modification; protein ubiquitination. E3 ubiquitin-protein ligase component of the ribosome quality control complex (RQC), a ribosome-associated complex that mediates ubiquitination and extraction of incompletely synthesized nascent chains for proteasomal degradation. Mediates ubiquitination of proteins derived from mRNAs lacking stop codons (non-stop proteins) and other translation arrest products induced by poly-lysine sequences and tandem rare codons. Ubiquitination leads to cdc48 recruitment for extraction and degradation of the incomplete translation product. May indirectly play a role in chromatin function and transcription. This Schizosaccharomyces pombe (strain 972 / ATCC 24843) (Fission yeast) protein is E3 ubiquitin-protein ligase listerin.